The chain runs to 198 residues: FMN-dependent NADH:quinone oxidoreductase (198 aa).

96 to 99 (MYNF) provides a ligand contact to FMN.

Belongs to the azoreductase type 1 family. Homodimer. The cofactor is FMN.

It carries out the reaction 2 a quinone + NADH + H(+) = 2 a 1,4-benzosemiquinone + NAD(+). The catalysed reaction is N,N-dimethyl-1,4-phenylenediamine + anthranilate + 2 NAD(+) = 2-(4-dimethylaminophenyl)diazenylbenzoate + 2 NADH + 2 H(+). Its function is as follows. Quinone reductase that provides resistance to thiol-specific stress caused by electrophilic quinones. Also exhibits azoreductase activity. Catalyzes the reductive cleavage of the azo bond in aromatic azo compounds to the corresponding amines. In Burkholderia mallei (strain ATCC 23344), this protein is FMN-dependent NADH:quinone oxidoreductase.